The sequence spans 186 residues: Threonylcarbamoyl-AMP synthase (186 aa).

One can recognise a YrdC-like domain in the interval 2 to 186 (VSNLQQVVKA…ARTEQLLRQG (185 aa)).

This sequence belongs to the SUA5 family. TsaC subfamily.

The protein resides in the cytoplasm. It carries out the reaction L-threonine + hydrogencarbonate + ATP = L-threonylcarbamoyladenylate + diphosphate + H2O. Functionally, required for the formation of a threonylcarbamoyl group on adenosine at position 37 (t(6)A37) in tRNAs that read codons beginning with adenine. Catalyzes the conversion of L-threonine, HCO(3)(-)/CO(2) and ATP to give threonylcarbamoyl-AMP (TC-AMP) as the acyladenylate intermediate, with the release of diphosphate. In Vibrio vulnificus (strain CMCP6), this protein is Threonylcarbamoyl-AMP synthase.